The sequence spans 299 residues: tRNA dimethylallyltransferase (299 aa).

An ATP-binding site is contributed by 13–20; the sequence is GPTASGKT. 15 to 20 serves as a coordination point for substrate; the sequence is TASGKT. The tract at residues 38-41 is interaction with substrate tRNA; that stretch reads DSRQ.

The protein belongs to the IPP transferase family. In terms of assembly, monomer. Mg(2+) is required as a cofactor.

It carries out the reaction adenosine(37) in tRNA + dimethylallyl diphosphate = N(6)-dimethylallyladenosine(37) in tRNA + diphosphate. Functionally, catalyzes the transfer of a dimethylallyl group onto the adenine at position 37 in tRNAs that read codons beginning with uridine, leading to the formation of N6-(dimethylallyl)adenosine (i(6)A). This Prochlorococcus marinus (strain NATL2A) protein is tRNA dimethylallyltransferase.